The following is a 502-amino-acid chain: UPF0371 protein CLJ_B0384 (502 aa).

Belongs to the UPF0371 family.

This is UPF0371 protein CLJ_B0384 from Clostridium botulinum (strain 657 / Type Ba4).